The following is a 641-amino-acid chain: Epithelial sodium channel subunit beta (641 aa).

The Cytoplasmic segment spans residues 1–50 (MHLKKYLLKGLHRLQKGPGYSYKELLVWYCNNTNTHGPKRIICEGPKKKA). A helical transmembrane segment spans residues 51-71 (MWFLITLLFTSLVCWQWGVFI). Over 72-533 (RTYLSWEVSV…GGQFGFWMGG (462 aa)) the chain is Extracellular. 9 cysteine pairs are disulfide-bonded: C98-C273, C185-C190, C197-C204, C250-C257, C362-C449, C387-C445, C391-C441, C400-C427, and C402-C416. N141 is a glycosylation site (N-linked (GlcNAc...) asparagine). An N-linked (GlcNAc...) asparagine glycan is attached at N261. A helical membrane pass occupies residues 534 to 554 (SVLCLIEFGEILIDFVWITII). Residues 555-641 (KLVAFAKSLR…IESDSEGDAI (87 aa)) are Cytoplasmic-facing. Residues 593-624 (PDVARPGPDPGTYPDEQTLPIPGTPPPNYDSL) form a disordered region. The PY motif; recruits WW domain-containing proteins and is thereby required for ubiquitination and inhibition of the channel by NEDD4 and NEDD4L signature appears at 617–621 (PPPNY). S634 and S636 each carry phosphoserine.

This sequence belongs to the amiloride-sensitive sodium channel (TC 1.A.6) family. SCNN1B subfamily. In terms of assembly, component of the heterotrimeric epithelial sodium channel (ENaC) composed of an alpha/SCNN1A, a beta/SCNN1B and a gamma/SCNN1G subunit. An additional delta/SCNN1D subunit can replace the alpha/SCNN1A subunit to form an alternative channel with specific properties. Interacts with WWP1 (via WW domains). Interacts with WWP2 (via WW domains); inhibits the channel. Interacts with the full-length immature form of PCSK9 (pro-PCSK9). Interacts (N-glycosylated) with BPIFA1; the interaction is direct and inhibits the proteolytic processing of SCNN1A and SCNN1G and the activation of ENaC. In terms of processing, ubiquitinated. Can be ubiquitinated at multiple sites and undergo monoubiquitination and polyubiquitination. Ubiquitination by NEDD4 or NEDD4L inhibits the ENaC channel through endocytosis, intracellular retention and degradation of its individual subunits. However, some studies could not confirm the ubiquitination of this subunit of the ENaC. Phosphorylated on serine and threonine residues. Aldosterone and insulin increase the basal level of phosphorylation. Post-translationally, N-glycosylated. N-glycosylation is required for interaction with BPIFA1.

It is found in the apical cell membrane. Its subcellular location is the cytoplasmic vesicle membrane. It catalyses the reaction Na(+)(in) = Na(+)(out). Originally identified and characterized by its inhibition by the diuretic drug amiloride. In terms of biological role, this is one of the three pore-forming subunits of the heterotrimeric epithelial sodium channel (ENaC), a critical regulator of sodium balance and fluid homeostasis. ENaC operates in epithelial tissues, where it mediates the electrodiffusion of sodium ions from extracellular fluid through the apical membrane of cells, with water following osmotically. It plays a key role in maintaining sodium homeostasis through electrogenic sodium reabsorption in the kidneys. Additionally, ENaC is essential for airway surface liquid homeostasis, which is crucial for proper mucus clearance. This is Epithelial sodium channel subunit beta from Canis lupus familiaris (Dog).